Here is a 403-residue protein sequence, read N- to C-terminus: Aspartate aminotransferase, cytoplasmic isozyme 2 (403 aa).

Position 1 is an N-acetylmethionine (M1). L-aspartate-binding residues include G37, W132, and N185. At K249 the chain carries N6-(pyridoxal phosphate)lysine. Position 377 (R377) interacts with L-aspartate.

Belongs to the class-I pyridoxal-phosphate-dependent aminotransferase family. As to quaternary structure, homodimer. Requires pyridoxal 5'-phosphate as cofactor.

The protein resides in the cytoplasm. The enzyme catalyses L-aspartate + 2-oxoglutarate = oxaloacetate + L-glutamate. In terms of biological role, important for the metabolism of amino acids and Krebs-cycle related organic acids. In plants, it is involved in nitrogen metabolism and in aspects of carbon and energy metabolism. This chain is Aspartate aminotransferase, cytoplasmic isozyme 2 (ASP4), found in Arabidopsis thaliana (Mouse-ear cress).